A 31-amino-acid chain; its full sequence is Photosystem I reaction center subunit XII (31 aa).

The helical transmembrane segment at 7–26 (QVYIALLTALIPAFFALKLG) threads the bilayer.

It belongs to the PsaM family.

The protein resides in the plastid. Its subcellular location is the chloroplast thylakoid membrane. This Euglena viridis (Cercaria viridis) protein is Photosystem I reaction center subunit XII.